Consider the following 425-residue polypeptide: Nucleoporin nup45 (425 aa).

Positions 1 to 10 (MFGLNKTPSF) are enriched in polar residues. The segment at 1-207 (MFGLNKTPSF…GFGLSNNTQT (207 aa)) is disordered. A compositionally biased stretch (low complexity) spans 11–27 (GSTGTQNQNTGTSAGTG). Residues 28 to 45 (LFSSNTFGNNTQANTPAS) are compositionally biased toward polar residues. The segment covering 47-56 (GFGGVTGGAF) has biased composition (gly residues). Residues 72–89 (PNATSTTPGLNLFGQNPQ) are compositionally biased toward polar residues. Composition is skewed to low complexity over residues 112–126 (NQNQ…AAPT) and 135–150 (QNQT…ANTS). A compositionally biased stretch (polar residues) spans 167-207 (NRPNTSTFGQFSTQPASAGLFGQSTQPSGSTGFGLSNNTQT). Ser-289 and Ser-290 each carry phosphoserine.

Its subcellular location is the cytoplasm. The protein resides in the nucleus. It is found in the nuclear pore complex. Its function is as follows. Functions as a component of the nuclear pore complex (NPC). NPC components, collectively referred to as nucleoporins (NUPs), can play the role of both NPC structural components and of docking or interaction partners for transiently associated nuclear transport factors. Active directional transport is assured by both, a Phe-Gly (FG) repeat affinity gradient for these transport factors across the NPC and a transport cofactor concentration gradient across the nuclear envelope. The sequence is that of Nucleoporin nup45 (nup45) from Schizosaccharomyces pombe (strain 972 / ATCC 24843) (Fission yeast).